A 503-amino-acid chain; its full sequence is UDP-N-acetylmuramoyl-L-alanyl-D-glutamate--2,6-diaminopimelate ligase (503 aa).

Ser32 provides a ligand contact to UDP-N-acetyl-alpha-D-muramoyl-L-alanyl-D-glutamate. An ATP-binding site is contributed by 117-123; the sequence is GTNGKTT. Residues 159–160, Ser186, Gln192, and Arg194 each bind UDP-N-acetyl-alpha-D-muramoyl-L-alanyl-D-glutamate; that span reads TT. At Lys226 the chain carries N6-carboxylysine. Meso-2,6-diaminopimelate contacts are provided by residues Arg396, 420–423, Gly471, and Glu475; that span reads DNPR. Positions 420–423 match the Meso-diaminopimelate recognition motif motif; it reads DNPR.

Belongs to the MurCDEF family. MurE subfamily. Mg(2+) serves as cofactor. Carboxylation is probably crucial for Mg(2+) binding and, consequently, for the gamma-phosphate positioning of ATP.

The protein localises to the cytoplasm. It catalyses the reaction UDP-N-acetyl-alpha-D-muramoyl-L-alanyl-D-glutamate + meso-2,6-diaminopimelate + ATP = UDP-N-acetyl-alpha-D-muramoyl-L-alanyl-gamma-D-glutamyl-meso-2,6-diaminopimelate + ADP + phosphate + H(+). Its pathway is cell wall biogenesis; peptidoglycan biosynthesis. Its function is as follows. Catalyzes the addition of meso-diaminopimelic acid to the nucleotide precursor UDP-N-acetylmuramoyl-L-alanyl-D-glutamate (UMAG) in the biosynthesis of bacterial cell-wall peptidoglycan. The polypeptide is UDP-N-acetylmuramoyl-L-alanyl-D-glutamate--2,6-diaminopimelate ligase (Prochlorococcus marinus (strain SARG / CCMP1375 / SS120)).